We begin with the raw amino-acid sequence, 305 residues long: MSNTNGSAITEFILLGLTDCPELQSLLFVLFLVVYLVTLLGNLGMIMLMRLDSRLHTPMYFFLTNLAFVDLCYTSNATPQMSTNIVSEKTISFAGCFTQCYIFIALLLTEFYMLAAMAYDRYVAIYDPLRYSVKTSRRVCICLATFPYVYGFSDGLFQAILTFRLTFCRSSVINHFYCADPPLIKLSCSDTYVKEHAMFISAGFNLSSSLTIVLVSYAFILAAILRIKSAEGRHKAFSTCGSHMMAVTLFYGTLFCMYIRPPTDKTVEESKIIAVFYTFVSPVLNPLIYSLRNKDVKQALKNVLR.

The Extracellular portion of the chain corresponds to 1 to 25 (MSNTNGSAITEFILLGLTDCPELQS). Asn5 is a glycosylation site (N-linked (GlcNAc...) asparagine). The chain crosses the membrane as a helical span at residues 26–46 (LLFVLFLVVYLVTLLGNLGMI). At 47 to 54 (MLMRLDSR) the chain is on the cytoplasmic side. The chain crosses the membrane as a helical span at residues 55-75 (LHTPMYFFLTNLAFVDLCYTS). At 76–98 (NATPQMSTNIVSEKTISFAGCFT) the chain is on the extracellular side. Cysteines 96 and 188 form a disulfide. A helical membrane pass occupies residues 99–119 (QCYIFIALLLTEFYMLAAMAY). Over 120 to 138 (DRYVAIYDPLRYSVKTSRR) the chain is Cytoplasmic. A helical transmembrane segment spans residues 139-159 (VCICLATFPYVYGFSDGLFQA). At 160–195 (ILTFRLTFCRSSVINHFYCADPPLIKLSCSDTYVKE) the chain is on the extracellular side. The helical transmembrane segment at 196-216 (HAMFISAGFNLSSSLTIVLVS) threads the bilayer. At 217-236 (YAFILAAILRIKSAEGRHKA) the chain is on the cytoplasmic side. Residues 237–257 (FSTCGSHMMAVTLFYGTLFCM) form a helical membrane-spanning segment. At 258-270 (YIRPPTDKTVEES) the chain is on the extracellular side. The helical transmembrane segment at 271–291 (KIIAVFYTFVSPVLNPLIYSL) threads the bilayer. At 292-305 (RNKDVKQALKNVLR) the chain is on the cytoplasmic side.

The protein belongs to the G-protein coupled receptor 1 family.

It localises to the cell membrane. Odorant receptor. This Homo sapiens (Human) protein is Olfactory receptor 5M11 (OR5M11).